Here is a 186-residue protein sequence, read N- to C-terminus: Elongation factor P (186 aa).

This sequence belongs to the elongation factor P family.

It localises to the cytoplasm. It functions in the pathway protein biosynthesis; polypeptide chain elongation. Its function is as follows. Involved in peptide bond synthesis. Stimulates efficient translation and peptide-bond synthesis on native or reconstituted 70S ribosomes in vitro. Probably functions indirectly by altering the affinity of the ribosome for aminoacyl-tRNA, thus increasing their reactivity as acceptors for peptidyl transferase. This chain is Elongation factor P, found in Shewanella baltica (strain OS223).